Here is a 391-residue protein sequence, read N- to C-terminus: Succinyl-diaminopimelate desuccinylase (391 aa).

His78 provides a ligand contact to Zn(2+). Asp80 is an active-site residue. Asp111 is a binding site for Zn(2+). Glu145 functions as the Proton acceptor in the catalytic mechanism. Residues Glu146, Glu174, and His360 each coordinate Zn(2+).

This sequence belongs to the peptidase M20A family. DapE subfamily. Homodimer. Requires Zn(2+) as cofactor. It depends on Co(2+) as a cofactor.

It catalyses the reaction N-succinyl-(2S,6S)-2,6-diaminopimelate + H2O = (2S,6S)-2,6-diaminopimelate + succinate. The protein operates within amino-acid biosynthesis; L-lysine biosynthesis via DAP pathway; LL-2,6-diaminopimelate from (S)-tetrahydrodipicolinate (succinylase route): step 3/3. Its function is as follows. Catalyzes the hydrolysis of N-succinyl-L,L-diaminopimelic acid (SDAP), forming succinate and LL-2,6-diaminopimelate (DAP), an intermediate involved in the bacterial biosynthesis of lysine and meso-diaminopimelic acid, an essential component of bacterial cell walls. The protein is Succinyl-diaminopimelate desuccinylase of Albidiferax ferrireducens (strain ATCC BAA-621 / DSM 15236 / T118) (Rhodoferax ferrireducens).